Here is an 89-residue protein sequence, read N- to C-terminus: Small ribosomal subunit protein uS15 (89 aa).

This sequence belongs to the universal ribosomal protein uS15 family. In terms of assembly, part of the 30S ribosomal subunit. Forms a bridge to the 50S subunit in the 70S ribosome, contacting the 23S rRNA.

Functionally, one of the primary rRNA binding proteins, it binds directly to 16S rRNA where it helps nucleate assembly of the platform of the 30S subunit by binding and bridging several RNA helices of the 16S rRNA. In terms of biological role, forms an intersubunit bridge (bridge B4) with the 23S rRNA of the 50S subunit in the ribosome. This chain is Small ribosomal subunit protein uS15, found in Bordetella avium (strain 197N).